Here is a 301-residue protein sequence, read N- to C-terminus: Glycine--tRNA ligase alpha subunit (301 aa).

This sequence belongs to the class-II aminoacyl-tRNA synthetase family. In terms of assembly, tetramer of two alpha and two beta subunits.

It localises to the cytoplasm. It carries out the reaction tRNA(Gly) + glycine + ATP = glycyl-tRNA(Gly) + AMP + diphosphate. The sequence is that of Glycine--tRNA ligase alpha subunit from Polaromonas sp. (strain JS666 / ATCC BAA-500).